The following is a 200-amino-acid chain: High mobility group protein B3 (200 aa).

At Lys-3 the chain carries N6-acetyllysine. 2 DNA-binding regions (HMG box) span residues 9–79 and 93–161; these read PKGK…KDYG and PKRP…ADYK. Cys-23 carries the post-translational modification Cysteine sulfonic acid (-SO3H); alternate. Residues Cys-23 and Cys-45 are joined by a disulfide bond. 2 positions are modified to N6-acetyllysine: Lys-30 and Lys-43. At Cys-45 the chain carries Cysteine sulfonic acid (-SO3H); alternate. The tract at residues 71-97 is disordered; that stretch reads YDREMKDYGPAKGGKKKKDPNAPKRPP. Ser-98 bears the Phosphoserine mark. Cys-104 bears the Cysteine sulfonic acid (-SO3H) mark. Residues Lys-112 and Lys-139 each carry the N6-acetyllysine modification. The disordered stretch occupies residues 161-200; sequence KSKGKFDGAKGPAKVARKKVEEEEEEEEEEEEEEEEEEDE. Acidic residues predominate over residues 182 to 200; it reads EEEEEEEEEEEEEEEEEDE.

It belongs to the HMGB family. Reduction/oxidation of cysteine residues Cys-23, Cys-45 and Cys-104 and a possible intramolecular disulfide bond involving Cys-23 and Cys-45 give rise to different redox forms with specific functional activities in various cellular compartments: 1- fully reduced HMGB3 (HMGB3C23hC45hC104h), 2- disulfide HMGB3 (HMGB3C23-C45C104h) and 3- sulfonyl HMGB3 (HMGB3C23soC45soC104so). Expressed in bone marrow cells, specifically in primitive Lin-, c-kit+, Sca-1+, IL-7Ralpha- cells, and Ter119+ erythroid cells.

It localises to the nucleus. Its subcellular location is the chromosome. The protein resides in the cytoplasm. Multifunctional protein with various roles in different cellular compartments. May act in a redox sensitive manner. Associates with chromatin and binds DNA with a preference for non-canonical DNA structures such as single-stranded DNA. Can bend DNA and enhance DNA flexibility by looping thus providing a mechanism to promote activities on various gene promoters. Proposed to be involved in the innate immune response to nucleic acids by acting as a cytoplasmic promiscuous immunogenic DNA/RNA sensor. Negatively regulates B-cell and myeloid cell differentiation. In hematopoietic stem cells may regulate the balance between self-renewal and differentiation. Involved in negative regulation of canonical Wnt signaling. This is High mobility group protein B3 (Hmgb3) from Mus musculus (Mouse).